The sequence spans 246 residues: Large ribosomal subunit protein uL2 (246 aa).

A disordered region spans residues 197 to 227 (SPYAHPHGGGSHQKGGTPVPKTAPPGQKVGF).

This sequence belongs to the universal ribosomal protein uL2 family. Part of the 50S ribosomal subunit. Forms a bridge to the 30S subunit in the 70S ribosome.

Functionally, one of the primary rRNA binding proteins. Required for association of the 30S and 50S subunits to form the 70S ribosome, for tRNA binding and peptide bond formation. It has been suggested to have peptidyltransferase activity; this is somewhat controversial. Makes several contacts with the 16S rRNA in the 70S ribosome. This chain is Large ribosomal subunit protein uL2, found in Pyrobaculum aerophilum (strain ATCC 51768 / DSM 7523 / JCM 9630 / CIP 104966 / NBRC 100827 / IM2).